Consider the following 132-residue polypeptide: Small ribosomal subunit protein uS11 (132 aa).

Belongs to the universal ribosomal protein uS11 family. In terms of assembly, part of the 30S ribosomal subunit. Interacts with proteins S7 and S18. Binds to IF-3.

Its function is as follows. Located on the platform of the 30S subunit, it bridges several disparate RNA helices of the 16S rRNA. Forms part of the Shine-Dalgarno cleft in the 70S ribosome. In Clostridium botulinum (strain 657 / Type Ba4), this protein is Small ribosomal subunit protein uS11.